The following is a 209-amino-acid chain: Large ribosomal subunit protein uL3 (209 aa).

Positions 118 to 151 are disordered; that stretch reads GFQGAIKRHGQSRGPMSHGSRYHRRPGSMGPVAP.

The protein belongs to the universal ribosomal protein uL3 family. As to quaternary structure, part of the 50S ribosomal subunit. Forms a cluster with proteins L14 and L19.

Its function is as follows. One of the primary rRNA binding proteins, it binds directly near the 3'-end of the 23S rRNA, where it nucleates assembly of the 50S subunit. This Enterococcus faecalis (strain ATCC 700802 / V583) protein is Large ribosomal subunit protein uL3.